A 146-amino-acid polypeptide reads, in one-letter code: Snaclec 4 (146 aa).

The N-terminal stretch at 1–23 (MGRFISISFGLLVVFLSLSGTEA) is a signal peptide. Disulfide bonds link Cys-27–Cys-38, Cys-55–Cys-144, and Cys-121–Cys-136. Residues 34–145 (YDQNCYKVFT…CNFIAPVVCK (112 aa)) enclose the C-type lectin domain.

Belongs to the snaclec family. As to quaternary structure, heterodimer; disulfide-linked.

It is found in the secreted. Interferes with one step of hemostasis (modulation of platelet aggregation, or coagulation cascade, for example). The protein is Snaclec 4 of Daboia siamensis (Eastern Russel's viper).